The sequence spans 522 residues: Man(5)GlcNAc(2)-PP-dolichol translocation protein RFT1 (522 aa).

Transmembrane regions (helical) follow at residues 35–55 (DVLG…LFLT), 75–95 (LLWL…YLWY), 108–128 (VLLS…FSVI), 143–165 (FAIG…LFMF), 177–197 (AQYI…YIYI), 322–342 (VVGV…PVVI), 354–374 (GGAL…INGI), 400–420 (IIHL…GFIV), 457–477 (TSIF…LFAT), and 479–499 (PGLS…ILTA).

It belongs to the RFT1 family.

Its subcellular location is the endoplasmic reticulum membrane. It functions in the pathway protein modification; protein glycosylation. Intramembrane glycolipid transporter that operates in the biosynthetic pathway of dolichol-linked oligosaccharides, the glycan precursors employed in protein asparagine (N)-glycosylation. The sequential addition of sugars to dolichol pyrophosphate produces dolichol-linked oligosaccharides containing fourteen sugars, including two GlcNAcs, nine mannoses and three glucoses. Once assembled, the oligosaccharide is transferred from the lipid to nascent proteins by oligosaccharyltransferases. The assembly of dolichol-linked oligosaccharides begins on the cytosolic side of the endoplasmic reticulum membrane and finishes in its lumen. RFT1 could mediate the translocation of the cytosolically oriented intermediate DolPP-GlcNAc2Man5, produced by ALG11, into the ER lumen where dolichol-linked oligosaccharides assembly continues. However, the intramembrane lipid transporter activity could not be confirmed in vitro. This is Man(5)GlcNAc(2)-PP-dolichol translocation protein RFT1 from Caenorhabditis elegans.